Consider the following 298-residue polypeptide: MSDEKIRQIAFYGKGGIGKSTTSQNTIAAMAEMGQRIMIVGCDPKADSTRLMLHSKAQTTILHLAAERGAVEDLELEEVLLTGFRDVRCVESGGPEPGVGCAGRGIITAINFLEENGAYEDLDFVSYDVLGDVVCGGFAMPIREGKAQEIYIVTSGEMMAMYAANNIARGVLKYAHSGGVRLGGLICNSRKVDRELELIETLAKRLNTQMLHFVPRDNIVQHAELRRMTVNEYAPDSNQANEYRVLAQKIIDNKNLAIPTPITMDELEDLLVEFGILGGEEEYQKAISQDQGKQLTTV.

13–20 contributes to the ATP binding site; it reads GKGGIGKS. Cys-101 is a binding site for [4Fe-4S] cluster. Position 104 is an ADP-ribosylarginine; by dinitrogenase reductase ADP-ribosyltransferase (Arg-104). Cys-135 contacts [4Fe-4S] cluster.

This sequence belongs to the NifH/BchL/ChlL family. Homodimer. [4Fe-4S] cluster is required as a cofactor. Post-translationally, the reversible ADP-ribosylation of Arg-104 inactivates the nitrogenase reductase and regulates nitrogenase activity.

The catalysed reaction is N2 + 8 reduced [2Fe-2S]-[ferredoxin] + 16 ATP + 16 H2O = H2 + 8 oxidized [2Fe-2S]-[ferredoxin] + 2 NH4(+) + 16 ADP + 16 phosphate + 6 H(+). In terms of biological role, the key enzymatic reactions in nitrogen fixation are catalyzed by the nitrogenase complex, which has 2 components: the iron protein and the molybdenum-iron protein. The chain is Nitrogenase iron protein from Cyanothece sp. (strain PCC 7425 / ATCC 29141).